The sequence spans 317 residues: MCTGVRFSDDEGNTYFGRNLDWSFSYGETILVTPRGYHYDTVFGAGGKAKPNAVIGVGVVMADRPMYFDCANEHGLAIAGLNFPGYASFVHEPVEGTENVATFEFPLWVARNFDSVDEVEETLRNVTLVSQIVPGQQESLLHWFIGDGKRSIVVEQMADGMHVHHDDVDVLTNQPTFDFHMENLRNYMCVSNEMAEPTSWGKASLTAWGAGVGMHGIPGDVSSPSRFVRVAYTNAHYPQQNDEAANVSRLFHTLGSVQMVDGMAKMGDGQFERTLFTSGYSSKTNTYYMNTYDDPAIRSYAMADYDMDSSELISVAR.

Cys2 (nucleophile; acyl-thioester intermediate) is an active-site residue. Residues Cys2 and Arg18 each contribute to the deoxycholate site. Asn82 lines the taurine pocket.

This sequence belongs to the peptidase C59 family. Homotetramer. The tetramer consists of a dimer of dimers.

It catalyses the reaction glycocholate + H2O = cholate + glycine. It carries out the reaction glycodeoxycholate + H2O = deoxycholate + glycine. The catalysed reaction is chenodeoxycholate + glycine = glycochenodeoxycholate + H2O. The enzyme catalyses cholate + taurine = taurocholate + H2O. It catalyses the reaction taurodeoxycholate + H2O = deoxycholate + taurine. It carries out the reaction taurochenodeoxycholate + H2O = chenodeoxycholate + taurine. The catalysed reaction is an L-alpha-amino acid + cholate = an N-choloyl-L-alpha-amino acid + H2O. The enzyme catalyses an L-alpha-amino acid + taurocholate = an N-choloyl-L-alpha-amino acid + taurine. It catalyses the reaction cholate + L-alanine = L-alanocholate + H2O. It carries out the reaction taurocholate + L-alanine = L-alanocholate + taurine. The catalysed reaction is cholate + L-serine = L-serocholate + H2O. The enzyme catalyses taurocholate + L-serine = L-serocholate + taurine. It catalyses the reaction cholate + L-histidine = L-histidocholate + H2O. It carries out the reaction taurocholate + L-histidine = L-histidocholate + taurine. The protein operates within lipid metabolism; bile acid biosynthesis. Hydrolase activity is competitively inhibited by the products cholate (CA) and deoxycholate (DCA), and by phenylacetate and 4-aminophenylacetate. Penicillin V and penicillin G show mixed inhibition. Strongly inhibited by thiol enzyme inhibitors in vitro. Functionally, possesses dual functions in bile acid metabolism. Acts as a bile salt hydrolase that catalyzes the deconjugation of glycine- and taurine-linked bile salts, which occurs naturally in the intestines of humans, releasing amino acid residues and deconjugated bile salts (bile acids). Can hydrolyze the amide bond in all six major human conjugated bile salts, namely glycocholate (GCA), glycodeoxycholate (GDCA), glycochenodeoxycholate (GCDCA), taurocholate (TCA), taurodeoxycholate (TDCA) and taurochenodeoxycholate (TCDCA). Shows a slight preference for glycine-conjugated bile acids as substrates. Also acts as an amine N-acyltransferase that conjugates a wide variety of amino acids to conjugated and non-conjugated bile acids, thus producing bacterial bile acid amidates (BBAAs) - also named microbially conjugated bile acids (MCBAs) - in the gastrointestinal tract. These BBAAs may facilitate communication between the microbiota and host through the activation of human ligand-activated transcription factors. Is totally inactive toward penicillin V. In Bifidobacterium longum, this protein is Bile salt hydrolase/transferase.